The following is a 288-amino-acid chain: GTP-binding protein 8 (288 aa).

Residues 109–282 (HRPEVCFIGR…RCFIADITGN (174 aa)) form the EngB-type G domain. GTP contacts are provided by residues 117–124 (GRSNVGKS), 146–150 (GHTKK), 164–167 (DMPG), 226–229 (TKID), and 261–263 (VSA). Mg(2+)-binding residues include Ser124 and Thr148.

This sequence belongs to the TRAFAC class TrmE-Era-EngA-EngB-Septin-like GTPase superfamily. EngB GTPase family. It depends on Mg(2+) as a cofactor.

The protein is GTP-binding protein 8 (GTPBP8) of Bos taurus (Bovine).